A 144-amino-acid chain; its full sequence is Large ribosomal subunit protein uL15 (144 aa).

Positions Met-1–Leu-57 are disordered. The segment covering Arg-21–Gly-31 has biased composition (gly residues). Over residues Gly-32–Gly-44 the composition is skewed to basic residues.

Belongs to the universal ribosomal protein uL15 family. In terms of assembly, part of the 50S ribosomal subunit.

Its function is as follows. Binds to the 23S rRNA. The protein is Large ribosomal subunit protein uL15 of Vibrio vulnificus (strain CMCP6).